A 303-amino-acid chain; its full sequence is tRNA pseudouridine synthase B (303 aa).

Asp38 (nucleophile) is an active-site residue.

The protein belongs to the pseudouridine synthase TruB family. Type 1 subfamily.

The enzyme catalyses uridine(55) in tRNA = pseudouridine(55) in tRNA. Functionally, responsible for synthesis of pseudouridine from uracil-55 in the psi GC loop of transfer RNAs. This chain is tRNA pseudouridine synthase B, found in Levilactobacillus brevis (strain ATCC 367 / BCRC 12310 / CIP 105137 / JCM 1170 / LMG 11437 / NCIMB 947 / NCTC 947) (Lactobacillus brevis).